Here is a 70-residue protein sequence, read N- to C-terminus: Large ribosomal subunit protein bL31 (70 aa).

4 residues coordinate Zn(2+): Cys-17, Cys-19, Cys-37, and Cys-40.

This sequence belongs to the bacterial ribosomal protein bL31 family. Type A subfamily. In terms of assembly, part of the 50S ribosomal subunit. Requires Zn(2+) as cofactor.

Its function is as follows. Binds the 23S rRNA. The polypeptide is Large ribosomal subunit protein bL31 (Clostridium acetobutylicum (strain ATCC 824 / DSM 792 / JCM 1419 / IAM 19013 / LMG 5710 / NBRC 13948 / NRRL B-527 / VKM B-1787 / 2291 / W)).